Consider the following 517-residue polypeptide: Aspartyl/glutamyl-tRNA(Asn/Gln) amidotransferase subunit B (517 aa).

Belongs to the GatB/GatE family. GatB subfamily. Heterotrimer of A, B and C subunits.

The catalysed reaction is L-glutamyl-tRNA(Gln) + L-glutamine + ATP + H2O = L-glutaminyl-tRNA(Gln) + L-glutamate + ADP + phosphate + H(+). It catalyses the reaction L-aspartyl-tRNA(Asn) + L-glutamine + ATP + H2O = L-asparaginyl-tRNA(Asn) + L-glutamate + ADP + phosphate + 2 H(+). In terms of biological role, allows the formation of correctly charged Asn-tRNA(Asn) or Gln-tRNA(Gln) through the transamidation of misacylated Asp-tRNA(Asn) or Glu-tRNA(Gln) in organisms which lack either or both of asparaginyl-tRNA or glutaminyl-tRNA synthetases. The reaction takes place in the presence of glutamine and ATP through an activated phospho-Asp-tRNA(Asn) or phospho-Glu-tRNA(Gln). The sequence is that of Aspartyl/glutamyl-tRNA(Asn/Gln) amidotransferase subunit B from Thermobifida fusca (strain YX).